Here is a 123-residue protein sequence, read N- to C-terminus: Large ribosomal subunit protein uL14 (123 aa).

The protein belongs to the universal ribosomal protein uL14 family. In terms of assembly, part of the 50S ribosomal subunit. Forms a cluster with proteins L3 and L19. In the 70S ribosome, L14 and L19 interact and together make contacts with the 16S rRNA in bridges B5 and B8.

In terms of biological role, binds to 23S rRNA. Forms part of two intersubunit bridges in the 70S ribosome. The polypeptide is Large ribosomal subunit protein uL14 (Tropheryma whipplei (strain TW08/27) (Whipple's bacillus)).